The chain runs to 283 residues: Bifunctional protein FolD (283 aa).

NADP(+)-binding positions include 163–165, Ser188, and Ile229; that span reads GRS.

This sequence belongs to the tetrahydrofolate dehydrogenase/cyclohydrolase family. As to quaternary structure, homodimer.

The enzyme catalyses (6R)-5,10-methylene-5,6,7,8-tetrahydrofolate + NADP(+) = (6R)-5,10-methenyltetrahydrofolate + NADPH. It catalyses the reaction (6R)-5,10-methenyltetrahydrofolate + H2O = (6R)-10-formyltetrahydrofolate + H(+). The protein operates within one-carbon metabolism; tetrahydrofolate interconversion. Catalyzes the oxidation of 5,10-methylenetetrahydrofolate to 5,10-methenyltetrahydrofolate and then the hydrolysis of 5,10-methenyltetrahydrofolate to 10-formyltetrahydrofolate. The polypeptide is Bifunctional protein FolD (Latilactobacillus sakei subsp. sakei (strain 23K) (Lactobacillus sakei subsp. sakei)).